A 179-amino-acid chain; its full sequence is Large ribosomal subunit protein uL5 (179 aa).

It belongs to the universal ribosomal protein uL5 family. As to quaternary structure, part of the 50S ribosomal subunit; part of the 5S rRNA/L5/L18/L25 subcomplex. Contacts the 5S rRNA and the P site tRNA. Forms a bridge to the 30S subunit in the 70S ribosome.

This is one of the proteins that bind and probably mediate the attachment of the 5S RNA into the large ribosomal subunit, where it forms part of the central protuberance. In the 70S ribosome it contacts protein S13 of the 30S subunit (bridge B1b), connecting the 2 subunits; this bridge is implicated in subunit movement. Contacts the P site tRNA; the 5S rRNA and some of its associated proteins might help stabilize positioning of ribosome-bound tRNAs. This Edwardsiella ictaluri (strain 93-146) protein is Large ribosomal subunit protein uL5.